A 48-amino-acid polypeptide reads, in one-letter code: GNCKCDDEGPYVRTAPLTGYVDLGYCNEGWEKCASYYSPIAECCRKKK.

Cystine bridges form between Cys-3/Cys-43, Cys-5/Cys-33, and Cys-26/Cys-44. Lys-48 carries the lysine amide; partial; in Delta-stichotoxin-Hcr1f modification.

This sequence belongs to the sea anemone sodium channel inhibitory toxin family. Type II subfamily. In terms of assembly, probably composed of two peptide chains of 12 and 35 residues connected by two disulfide bonds (Cys-3-Cys-43 and Cys-5-Cys-33). In terms of processing, delta-SHTX-Hcr1f (RTX-VI) may be the result of post-translational modification of delta-SHTX-Hcr1a (RTX-III), which would consist of Arg-13 cleavage.

The protein resides in the secreted. The protein localises to the nematocyst. Its function is as follows. Binds to site 3 of voltage-gated sodium channels and inhibits the inactivation process. Specifically inhibits mammalian Nav1.3/SCN3A and Nav1.6/SCN8A sodium channels, as well as insect BgNav1 and VdNav1 sodium channels. Functionally, binds to site 3 of voltage-gated sodium channels and inhibits the inactivation process. Specifically inhibits mammalian Nav1.2/SCN3A (low inhibition) and Nav1.6/SCN8A sodium channels, as well as insect BgNav1 and VdNav1 sodium channels. The sequence is that of Delta-stichotoxin-Hcr1a from Radianthus crispa (Leathery sea anemone).